The primary structure comprises 686 residues: Endonuclease GajA (686 aa).

The tract at residues 1–423 (MYLKSLKIYN…NYVTTKNNYT (423 aa)) is ATPase domain. 52–56 (NCGKT) provides a ligand contact to ATP. The interval 463–599 (FFSDAIIFVE…TSFEEAFILT (137 aa)) is toprim domain. A divalent metal cation contacts are provided by Glu472, Glu476, Asp559, and Glu604.

As to quaternary structure, homotetramer. Forms the core of the anti-phage defense complex. Interacts with GajB; 2 GajB dimers dock at opposite sides of the GajA complex to form a 4:4 GajA-GajB assembly (GajAB). GajAB interacts with Bacillus phage Phi3T Gad1 protein; this interaction forms a 4:4:8 GajAB-Gad1 complex and leads to GajAB inhibition. Requires Mg(2+) as cofactor.

Its function is as follows. Component of antiviral defense system Gabija type II, composed of GajA and GajB. Probably a nicking endonuclease that is strongly inhibited by physiological levels of nucleotides (NTP and dNTP). Expression of Gabija type II in B.subtilis (strain BEST7003) confers resistance to phages phi105, and SpBeta. During viral replication, when nucleotides are rapidly consumed, it is de-suppressed and degrades target DNA. This is Endonuclease GajA from Bacillus cereus (strain HuB5-5).